The following is a 26-amino-acid chain: M-poneritoxin-Ng1d (26 aa).

Expressed by the venom gland.

It is found in the secreted. It localises to the target cell membrane. Functionally, has a broad spectrum of activity against both Gram-positive and Gram-negative bacteria and S.cerevisiae. Has insecticidal and hemolytic activities. May act by disrupting the integrity of the bacterial cell membrane. In Neoponera goeldii (Ponerine ant), this protein is M-poneritoxin-Ng1d.